A 250-amino-acid chain; its full sequence is Urease accessory protein UreF (250 aa).

The interval 1–21 (MDEADPGEAEAAQAEAAQDGA) is disordered. Residues 9–21 (AEAAQAEAAQDGA) show a composition bias toward low complexity.

It belongs to the UreF family. UreD, UreF and UreG form a complex that acts as a GTP-hydrolysis-dependent molecular chaperone, activating the urease apoprotein by helping to assemble the nickel containing metallocenter of UreC. The UreE protein probably delivers the nickel.

The protein localises to the cytoplasm. Its function is as follows. Required for maturation of urease via the functional incorporation of the urease nickel metallocenter. The protein is Urease accessory protein UreF of Methylobacterium sp. (strain 4-46).